Reading from the N-terminus, the 107-residue chain is UPF0060 membrane protein Atu1058 (107 aa).

The next 4 membrane-spanning stretches (helical) occupy residues 5 to 25, 32 to 52, 59 to 79, and 85 to 105; these read LIYV…WAWL, WILL…TLVA, AYAA…WGVE, and RWDI…LFGP.

It belongs to the UPF0060 family.

The protein resides in the cell inner membrane. The chain is UPF0060 membrane protein Atu1058 from Agrobacterium fabrum (strain C58 / ATCC 33970) (Agrobacterium tumefaciens (strain C58)).